The chain runs to 83 residues: U25-theraphotoxin-Cg1a (83 aa).

A signal peptide spans 1–23; sequence MRFHTLLFLSFLLLVSCALICTA. Positions 24 to 48 are excised as a propeptide; the sequence is QHPGLEKSGMFHENVGKGQHIEEKR. 3 disulfides stabilise this stretch: Cys50–Cys66, Cys57–Cys71, and Cys65–Cys81.

The protein belongs to the neurotoxin 07 (Beta/delta-agtx) family. 03 (aga-4) subfamily. JZTX sub-subfamily. In terms of tissue distribution, expressed by the venom gland.

It localises to the secreted. Its function is as follows. Inhibits TTX-sensitive sodium currents in rat dorsal root ganglion (DRG) neurons. This is U25-theraphotoxin-Cg1a from Chilobrachys guangxiensis (Chinese earth tiger tarantula).